The following is an 89-amino-acid chain: Putative septation protein SpoVG (89 aa).

This sequence belongs to the SpoVG family.

In terms of biological role, could be involved in septation. In Heliobacterium modesticaldum (strain ATCC 51547 / Ice1), this protein is Putative septation protein SpoVG.